Here is a 196-residue protein sequence, read N- to C-terminus: Molybdopterin synthase catalytic subunit (196 aa).

Positions 1 to 29 (MSTLPSTDPPPLPASTSSQQPAVHIPPPS) are disordered. Substrate-binding positions include 145–146 (HR), lysine 161, and 168–170 (KRE). The disordered stretch occupies residues 174-196 (GEPPGQGEWRANRDTDPEGKSTS). Positions 183–196 (RANRDTDPEGKSTS) are enriched in basic and acidic residues.

The protein belongs to the MoaE family. MOCS2B subfamily. Heterotetramer; composed of 2 small (MOCS2A) and 2 large (MOCS2B) subunits.

Its subcellular location is the cytoplasm. It carries out the reaction 2 [molybdopterin-synthase sulfur-carrier protein]-C-terminal-Gly-aminoethanethioate + cyclic pyranopterin phosphate + H2O = molybdopterin + 2 [molybdopterin-synthase sulfur-carrier protein]-C-terminal Gly-Gly + 2 H(+). The protein operates within cofactor biosynthesis; molybdopterin biosynthesis. In terms of biological role, catalytic subunit of the molybdopterin synthase complex, a complex that catalyzes the conversion of precursor Z into molybdopterin. Acts by mediating the incorporation of 2 sulfur atoms from thiocarboxylated MOCS2A into precursor Z to generate a dithiolene group. The chain is Molybdopterin synthase catalytic subunit from Coccidioides immitis (strain RS) (Valley fever fungus).